Reading from the N-terminus, the 305-residue chain is Dihydroorotate dehydrogenase B (NAD(+)), catalytic subunit (305 aa).

FMN contacts are provided by residues Ser21 and 45–46 (KA). Residues Lys45 and 69–73 (NAIGL) contribute to the substrate site. Positions 99 and 127 each coordinate FMN. Asn127 serves as a coordination point for substrate. The active-site Nucleophile is the Cys130. Residues Lys165 and Ile190 each contribute to the FMN site. 191-192 (NT) contributes to the substrate binding site. FMN-binding positions include Gly216, 242–243 (GG), and 264–265 (GT).

This sequence belongs to the dihydroorotate dehydrogenase family. Type 1 subfamily. In terms of assembly, heterotetramer of 2 PyrK and 2 PyrD type B subunits. FMN serves as cofactor.

It is found in the cytoplasm. It catalyses the reaction (S)-dihydroorotate + NAD(+) = orotate + NADH + H(+). Its pathway is pyrimidine metabolism; UMP biosynthesis via de novo pathway; orotate from (S)-dihydroorotate (NAD(+) route): step 1/1. Its function is as follows. Catalyzes the conversion of dihydroorotate to orotate with NAD(+) as electron acceptor. The polypeptide is Dihydroorotate dehydrogenase B (NAD(+)), catalytic subunit (pyrD) (Staphylococcus carnosus (strain TM300)).